The primary structure comprises 1420 residues: MKDLFKFFKTHSNGKIEEFNTIKIQLASPDMIRSWSFGEVKKPETINYRTFKPERDGLFCSRIFGPIKDYECLCGKYKRLKHRGVVCEKCGVEVTQSKVRRERMGHIELASPTAHIWFLKSLPSRIGLLLDMPLRDIERVLYFESYVVVEGGMTSLECRQILTEEEYLDALEEFGDEFEAKMGAEAIQILLKNMDLKNECECLRAFLEDSHSETKRKKVSKRIKLIESFILSNNKPEWMILNVLPVLPPDLRPLVPLDGGRFATSDLNDLYRRVINRNNRLKRLLDLSAPEIIVRNEKRMLQEAVDALLDNGRRGRAITGANKRPLKSLADMIKGKQGRFRQNLLGKRVDYSGRSVITVGPYLKLHQCGLPKKMALELFKPFIYGQLELKGLASTIKAAKKMVDREESVVWDILEDVIKEHPVMLNRAPTLHRLGIQAFEPILIEGKAIQLHPLVCAAYNADFDGDQMAVHVPLTLEAQLEARALMMSTNNILSPANGEPIIVPSQDVVLGLYYMTRDRINSKGEGMVLSNPKEAERLYRLGIAELHARVKVRITEYKLDNHGRWVDKINFVNSTIGRAIFWMIVPKGLSFDLVNKVLGKKSISMMLNHCYRVLGLQSTVMFADQIMYTGFTYAARSGASVGIDDMIIPTKKVDIIDAAESEVAEIQEQFQTGLVTAGERYNKVIDIWASANERVSKAMMDNLATETVINSHGLLETQASFNNIFMMADSGARGSAAQIRQLAGMRGLMAKPDGSIIETPITANFREGLNVLQYFISTHGARKGLADTALKTANSGYLTRRLVDVAQDLVITQDDCNTFAGIVMSAIIEGGDVKESLRERVLGRVLAEDILKSSNDSDVSNSEVLIKRNILLDEFYCDILDEYLIDVVKVRSVVTCDTDFGVCAKCYGRDLARGKLVNKGEAIGVIAAQSIGEPGTQLTMRTFHIGGAASRVASESSIQIKNQGIVRLKNVKAVINGQGKLVITSRHAELKIVDQFDRAKESYKIPYGSIVMKKDGELAVSGEIVAYWDPHTMPVIAEVSGFVKFIDMVDGQSVIHQTDDLTGLTSIVVLDTSERVSSAKDLRPTLKIIDVNGYDIFIPGTDISAQYFLPGKSVIQLVDGSRIISGDVLARLPHETSGTKDITGGLPRVADLFEARRPKEAAILAEISGVISFGKETKGKRRLMICSTDENGGENIYEEMIPKWRHLNVFEGEYVERGDVISDGPESPHDILRLRGVHAVTNYIVNEVQEVYRLQGVKINDKHIEVIIRQMLRKAIVIRSGDSDFLAGEQVEYARIKIVNQTLEREGKVKVSFVRNLLGITKASLATESFISAASFQETTRVLTESSVAGKKDDLRGLKENVIVGRLIPAGTGYAYHQKRILKRYSESYSDSKLKENLIETIPVTADEASANLTELLNAT.

Zn(2+) contacts are provided by Cys-72, Cys-74, Cys-87, and Cys-90. The Mg(2+) site is built by Asp-462, Asp-464, and Asp-466. Zn(2+)-binding residues include Cys-816, Cys-896, Cys-903, and Cys-906.

The protein belongs to the RNA polymerase beta' chain family. The RNAP catalytic core consists of 2 alpha, 1 beta, 1 beta' and 1 omega subunit. When a sigma factor is associated with the core the holoenzyme is formed, which can initiate transcription. Requires Mg(2+) as cofactor. Zn(2+) is required as a cofactor.

The enzyme catalyses RNA(n) + a ribonucleoside 5'-triphosphate = RNA(n+1) + diphosphate. Functionally, DNA-dependent RNA polymerase catalyzes the transcription of DNA into RNA using the four ribonucleoside triphosphates as substrates. This Blochmanniella floridana protein is DNA-directed RNA polymerase subunit beta'.